The sequence spans 283 residues: MYSFTAYANSVIVAFHLLKFSSSENNIEISYADEDTIPEYVSIRDLNAGDKTTVELYPLVAWKVIAQEDISTGDRVSVGKNGQVKKTTDMRTTFGYAVSPAKAGQLVTVAISTVFDTIITPDDLGDVDDDVKAFLKSNTTDENKSNLRELLVADADVKALLSGSTTDANKAKLRDLLFSNLDVKAFLSGSTSEDNKVNLRNLLVSNPAILAFLNANPDTDTQTTLRTMIGAGTPYTLPAATTTTLGGVKRMPAIANSTATDVATLVKDFNNLLAALRTAGHSL.

Belongs to the phi29likevirus major capsid fiber protein family. Homotrimer. Forms a super helix coiled coil in the homotrimer.

It is found in the virion. Protein that forms the 55 capsid fibers. These fibers are not always present and may have been lost in some lab strains. They may enhance the attachment of the virions onto the host cell wall. This Bacillus subtilis (Bacteriophage B103) protein is Capsid fiber protein (8.5).